The following is a 206-amino-acid chain: LexA repressor (206 aa).

Residues 28–48 constitute a DNA-binding region (H-T-H motif); the sequence is VREICNAVGLSSTSTVHGHLS. Active-site for autocatalytic cleavage activity residues include S128 and K166.

Belongs to the peptidase S24 family. In terms of assembly, homodimer.

It carries out the reaction Hydrolysis of Ala-|-Gly bond in repressor LexA.. Its function is as follows. Represses a number of genes involved in the response to DNA damage (SOS response), including recA and lexA. In the presence of single-stranded DNA, RecA interacts with LexA causing an autocatalytic cleavage which disrupts the DNA-binding part of LexA, leading to derepression of the SOS regulon and eventually DNA repair. The sequence is that of LexA repressor from Ligilactobacillus salivarius (strain UCC118) (Lactobacillus salivarius).